The primary structure comprises 396 residues: Tyrosine--tRNA ligase (396 aa).

An L-tyrosine-binding site is contributed by Tyr-36. A 'HIGH' region motif is present at residues 41 to 50 (PTANSLHIGN). L-tyrosine contacts are provided by Tyr-165 and Gln-169. A 'KMSKS' region motif is present at residues 225 to 229 (KMGKT). ATP is bound at residue Lys-228. In terms of domain architecture, S4 RNA-binding spans 331–394 (TNLIDYLVET…KKSFLTIKTV (64 aa)).

It belongs to the class-I aminoacyl-tRNA synthetase family. TyrS type 1 subfamily. Homodimer.

The protein localises to the cytoplasm. It catalyses the reaction tRNA(Tyr) + L-tyrosine + ATP = L-tyrosyl-tRNA(Tyr) + AMP + diphosphate + H(+). Its function is as follows. Catalyzes the attachment of tyrosine to tRNA(Tyr) in a two-step reaction: tyrosine is first activated by ATP to form Tyr-AMP and then transferred to the acceptor end of tRNA(Tyr). The chain is Tyrosine--tRNA ligase from Mycoplasma genitalium (strain ATCC 33530 / DSM 19775 / NCTC 10195 / G37) (Mycoplasmoides genitalium).